Consider the following 152-residue polypeptide: Large ribosomal subunit protein bL9 (152 aa).

This sequence belongs to the bacterial ribosomal protein bL9 family.

Functionally, binds to the 23S rRNA. This is Large ribosomal subunit protein bL9 from Nocardia farcinica (strain IFM 10152).